A 466-amino-acid polypeptide reads, in one-letter code: Asparagine--tRNA ligase (466 aa).

The protein belongs to the class-II aminoacyl-tRNA synthetase family. Homodimer.

It is found in the cytoplasm. The enzyme catalyses tRNA(Asn) + L-asparagine + ATP = L-asparaginyl-tRNA(Asn) + AMP + diphosphate + H(+). This chain is Asparagine--tRNA ligase, found in Salmonella paratyphi A (strain ATCC 9150 / SARB42).